The following is a 133-amino-acid chain: MQRVTITLDDDLLETLDSLSQRRGYNNRSEAIRDILRSALAQEATQQHGTQGFAVLSYVYEHEKRDLASRIVSTQHHHHDLSVATLHVHINHDDCLEIAVLKGDMGDVQHFADDVIAQRGVRHGHLQCLPKED.

Ni(2+) is bound by residues H76, H87, H89, and C95.

It belongs to the transcriptional regulatory CopG/NikR family. As to quaternary structure, homotetramer. Ni(2+) is required as a cofactor.

Transcriptional repressor of the nikABCDE operon. Is active in the presence of excessive concentrations of intracellular nickel. This Shigella dysenteriae serotype 1 (strain Sd197) protein is Nickel-responsive regulator.